Here is a 157-residue protein sequence, read N- to C-terminus: SsrA-binding protein (157 aa).

The protein belongs to the SmpB family.

Its subcellular location is the cytoplasm. Required for rescue of stalled ribosomes mediated by trans-translation. Binds to transfer-messenger RNA (tmRNA), required for stable association of tmRNA with ribosomes. tmRNA and SmpB together mimic tRNA shape, replacing the anticodon stem-loop with SmpB. tmRNA is encoded by the ssrA gene; the 2 termini fold to resemble tRNA(Ala) and it encodes a 'tag peptide', a short internal open reading frame. During trans-translation Ala-aminoacylated tmRNA acts like a tRNA, entering the A-site of stalled ribosomes, displacing the stalled mRNA. The ribosome then switches to translate the ORF on the tmRNA; the nascent peptide is terminated with the 'tag peptide' encoded by the tmRNA and targeted for degradation. The ribosome is freed to recommence translation, which seems to be the essential function of trans-translation. The sequence is that of SsrA-binding protein from Chlorobium phaeovibrioides (strain DSM 265 / 1930) (Prosthecochloris vibrioformis (strain DSM 265)).